Reading from the N-terminus, the 829-residue chain is Cap-specific mRNA (nucleoside-2'-O-)-methyltransferase 1 (829 aa).

The interval 1 to 68 (MKRAAQASDE…DSQNSQGSMA (68 aa)) is disordered. The Bipartite nuclear localization signal signature appears at 2 to 16 (KRAAQASDEPLKKRK). The segment covering 31 to 44 (QRTTSQDSSQSESL) has biased composition (low complexity). Polar residues predominate over residues 55–68 (SRPSDSQNSQGSMA). Positions 79-125 (YNNVSQKLMAKMGFREGEGLGKYGQGRKEIVEASTQRGRRGLGLMLK) constitute a G-patch domain. Residues 195–199 (KTVFD) and Arg-210 contribute to the substrate site. The RrmJ-type SAM-dependent 2'-O-MTase domain occupies 223-442 (FFLNRAAMKM…ERYVVCKGLK (220 aa)). Residue Asn-226 coordinates S-adenosyl-L-methionine. The active site involves Lys-231. S-adenosyl-L-methionine-binding positions include 269–275 (CAGPGGF) and 327–328 (DI). Asp-356 is a catalytic residue. 366–368 (NLQ) lines the substrate pocket. Lys-396 functions as the Proton acceptor in the catalytic mechanism. Asn-431 is a binding site for substrate. Residues 745 to 779 (KTVNDPWTMAFSKSSKRKFFYNKQTKESTYDLPAT) enclose the WW domain.

The protein resides in the nucleus. The catalysed reaction is a 5'-end (N(7)-methyl 5'-triphosphoguanosine)-ribonucleoside in mRNA + S-adenosyl-L-methionine = a 5'-end (N(7)-methyl 5'-triphosphoguanosine)-(2'-O-methyl-ribonucleoside) in mRNA + S-adenosyl-L-homocysteine + H(+). Functionally, S-adenosyl-L-methionine-dependent methyltransferase that mediates mRNA cap1 2'-O-ribose methylation to the 5'-cap structure of mRNAs. Methylates the ribose of the first nucleotide of a m(7)GpppG-capped mRNA and small nuclear RNA (snRNA) to produce m(7)GpppRm (cap1). Displays a preference for cap0 transcripts. Cap1 modification is linked to higher levels of translation. May be involved in the interferon response pathway. The protein is Cap-specific mRNA (nucleoside-2'-O-)-methyltransferase 1 (cmtr1) of Danio rerio (Zebrafish).